Here is a 570-residue protein sequence, read N- to C-terminus: Proline--tRNA ligase (570 aa).

The protein belongs to the class-II aminoacyl-tRNA synthetase family. ProS type 1 subfamily. Homodimer.

Its subcellular location is the cytoplasm. The enzyme catalyses tRNA(Pro) + L-proline + ATP = L-prolyl-tRNA(Pro) + AMP + diphosphate. Its function is as follows. Catalyzes the attachment of proline to tRNA(Pro) in a two-step reaction: proline is first activated by ATP to form Pro-AMP and then transferred to the acceptor end of tRNA(Pro). As ProRS can inadvertently accommodate and process non-cognate amino acids such as alanine and cysteine, to avoid such errors it has two additional distinct editing activities against alanine. One activity is designated as 'pretransfer' editing and involves the tRNA(Pro)-independent hydrolysis of activated Ala-AMP. The other activity is designated 'posttransfer' editing and involves deacylation of mischarged Ala-tRNA(Pro). The misacylated Cys-tRNA(Pro) is not edited by ProRS. The polypeptide is Proline--tRNA ligase (Clostridium beijerinckii (strain ATCC 51743 / NCIMB 8052) (Clostridium acetobutylicum)).